A 639-amino-acid chain; its full sequence is Bone morphogenetic protein 1 homolog (639 aa).

The signal sequence occupies residues 1 to 23; it reads MDLLYYMTVSLLGFILSLTTFIG. A propeptide spanning residues 24–109 is cleaved from the precursor; sequence ETTRALSDDV…RAVTARPERR (86 aa). Residues 100 to 305 enclose the Peptidase M12A domain; the sequence is RAVTARPERR…IQANLLYKCP (206 aa). N-linked (GlcNAc...) asparagine glycosylation is found at Asn-122 and Asn-140. Intrachain disulfides connect Cys-143-Cys-304, Cys-167-Cys-189, Cys-169-Cys-170, Cys-307-Cys-333, Cys-360-Cys-382, and Cys-420-Cys-446. His-197 is a Zn(2+) binding site. Glu-198 is an active-site residue. Residues His-201 and His-207 each contribute to the Zn(2+) site. CUB domains follow at residues 307-419 and 420-531; these read CGRT…YEAI and CGGH…DFFK. The N-linked (GlcNAc...) asparagine glycan is linked to Asn-317. A glycan (N-linked (GlcNAc...) asparagine) is linked at Asn-455. Intrachain disulfides connect Cys-473–Cys-495, Cys-536–Cys-548, Cys-544–Cys-557, and Cys-559–Cys-572. The region spanning 532-573 is the EGF-like; calcium-binding domain; that stretch reads EKDECAQPDQGGCMDVCVNTIGSYRCDCRPGYELSSDGRRCE.

Requires Zn(2+) as cofactor. Ectodermal and primary mesenchyme cells in hatched blastula.

The polypeptide is Bone morphogenetic protein 1 homolog (Strongylocentrotus purpuratus (Purple sea urchin)).